The chain runs to 123 residues: UPF0231 protein plu3616 (123 aa).

The protein belongs to the UPF0231 family.

This chain is UPF0231 protein plu3616, found in Photorhabdus laumondii subsp. laumondii (strain DSM 15139 / CIP 105565 / TT01) (Photorhabdus luminescens subsp. laumondii).